The chain runs to 107 residues: Metallothionein-1 (107 aa).

Belongs to the metallothionein superfamily. Type 7 family.

The metallothioneins are involved in the cellular sequestration of toxic metal ions. Binds 12 cadmium ions per molecule. This Tetrahymena thermophila protein is Metallothionein-1.